Here is a 342-residue protein sequence, read N- to C-terminus: Alpha-(1,3)-fucosyltransferase 7 (342 aa).

The Cytoplasmic segment spans residues 1-11; that stretch reads MQNAGLSPTPS. A helical; Signal-anchor for type II membrane protein transmembrane segment spans residues 12 to 31; sequence LRALGGLAMAALLSTVWLWW. Over 32–342 the chain is Extracellular; that stretch reads RLGAAPGGAP…YQDLEGWFQA (311 aa). The cysteines at positions 68 and 76 are disulfide-linked. N-linked (GlcNAc...) asparagine glycosylation occurs at N81. An intrachain disulfide couples C211 to C214. N291 is a glycosylation site (N-linked (GlcNAc...) asparagine). C318 and C321 are disulfide-bonded.

This sequence belongs to the glycosyltransferase 10 family. N-glycosylated. In terms of tissue distribution, expressed in thymus, spleen, liver and lung. Highly expressed in the thymus and lower expressed in the lung.

It localises to the membrane. It carries out the reaction an N-acetyl-alpha-neuraminyl-(2-&gt;3)-beta-D-galactosyl-(1-&gt;4)-N-acetyl-beta-D-glucosaminyl derivative + GDP-beta-L-fucose = an alpha-Neu5Ac-(2-&gt;3)-beta-D-Gal-(1-&gt;4)-[alpha-L-Fuc-(1-&gt;3)]-beta-D-GlcNAc derivative + GDP + H(+). The enzyme catalyses a neolactoside IV(3)-alpha-NeuAc-nLc4Cer + GDP-beta-L-fucose = a neolactoside IV(3)-alpha-NeuNAc,III(3)-alpha-Fuc-nLc4Cer + GDP + H(+). The catalysed reaction is a neolactoside VI(3)-alpha-NeuNAc-nLc6Cer + GDP-beta-L-fucose = a neolactoside VI(3)-alpha-NeuAc,V(3)-alphaFuc-nLc6Cer + GDP + H(+). It catalyses the reaction an alpha-Neu5Ac-(2-&gt;3)-beta-D-Gal-(1-&gt;4)-beta-D-GlcNAc-(1-&gt;3)-beta-D-Gal-(1-&gt;4)-[alpha-L-Fuc-(1-&gt;3)]-beta-D-GlcNAc derivative + GDP-beta-L-fucose = an alpha-Neu5Ac-(2-&gt;3)-beta-D-Gal-(1-&gt;4)-[alpha-L-Fuc-(1-&gt;3)]-beta-D-GlcNAc-(1-&gt;3)-beta-D-Gal-(1-&gt;4)-[alpha-L-Fuc-(1-&gt;3)]-beta-D-GlcNAc derivative + GDP + H(+). It carries out the reaction an alpha-Neu5Ac-(2-&gt;3)-beta-D-Gal-(1-&gt;4)-beta-D-GlcNAc6S derivative + GDP-beta-L-fucose = an alpha-Neu5Ac-(2-&gt;3)-beta-D-Gal-(1-&gt;4)-[alpha-L-Fuc-(1-&gt;3)]-beta-D-GlcNAc6S derivative + GDP + H(+). The enzyme catalyses alpha-Neu5Ac-(2-&gt;3)-beta-D-Gal-(1-&gt;4)-beta-D-GlcNAc-(1-&gt;3)-beta-D-Gal-(1-&gt;4)-D-Glc + GDP-beta-L-fucose = alpha-Neu5Ac-(2-&gt;3)-beta-D-Gal-(1-&gt;4)-[alpha-L-Fuc-(1-&gt;3)]-beta-D-GlcNAc-(1-&gt;3)-beta-D-Gal-(1-&gt;4)-D-Glc + GDP + H(+). The catalysed reaction is alpha-Neu5Ac-(2-&gt;3)-beta-D-Gal-(1-&gt;4)-beta-D-GlcNAc-(1-&gt;3)-beta-D-Gal-(1-&gt;4)-[alpha-L-Fuc-(1-&gt;3)]-beta-D-GlcNAc-(1-&gt;3)-beta-D-Gal-(1-&gt;4)-beta-D-GlcNAc + GDP-beta-L-fucose = alpha-Neu5Ac-(2-&gt;3)-beta-D-Gal-(1-&gt;4)-[alpha-L-Fuc-(1-&gt;3)]-beta-D-GlcNAc-(1-&gt;3)-beta-D-Gal-(1-&gt;4)-[alpha-L-Fuc-(1-&gt;3)]-beta-D-GlcNAc-(1-&gt;3)-beta-D-Gal-(1-&gt;4)-beta-D-GlcNAc + GDP + H(+). It catalyses the reaction alpha-Neu5Ac-(2-&gt;3)-beta-D-Gal-(1-&gt;4)-beta-D-GlcNAc-(1-&gt;3)-beta-D-Gal-(1-&gt;4)-beta-D-GlcNAc-(1-&gt;3)-beta-D-Gal-(1-&gt;4)-beta-D-GlcNAc + GDP-beta-L-fucose = alpha-Neu5Ac-(2-&gt;3)-beta-D-Gal-(1-&gt;4)-[alpha-L-Fuc-(1-&gt;3)]-beta-D-GlcNAc-(1-&gt;3)-beta-D-Gal-(1-&gt;4)-beta-D-GlcNAc-(1-&gt;3)-beta-D-Gal-(1-&gt;4)-beta-D-GlcNAc + GDP + H(+). It functions in the pathway protein modification; protein glycosylation. Inhibited by NaCl. Inhibited by GDP in a concentration dependent manner, with an IC(50) value of 93 uM. Also inhibited by GMP and GTP. Inhibited by N-ethylmaleimide. Activated by poly(ethylene glycol) by enhancing the thermal stability of FUT7. Activated by Mn2+, Ca2+, and Mg2+. Both panosialin A and B inhibit activity with IC(50) values of 4.8 and 5.3 ug/ml, respectively. Inhibited by gallic acid (GA) and (-)-epigallocatechin gallate (EGCG) in a time-dependent and irreversible manner with IC(50) values of 60 and 700 nM, respectively. In terms of biological role, catalyzes the transfer of L-fucose, from a guanosine diphosphate-beta-L-fucose, to the N-acetyl glucosamine (GlcNAc) of a distal alpha2,3 sialylated lactosamine unit of a glycoprotein or a glycolipid-linked sialopolylactosamines chain through an alpha-1,3 glycosidic linkage and participates in the final fucosylation step in the biosynthesis of the sialyl Lewis X (sLe(x)), a carbohydrate involved in cell and matrix adhesion during leukocyte trafficking and fertilization. In vitro, also synthesizes sialyl-dimeric-Lex structures, from VIM-2 structures and both di-fucosylated and trifucosylated structures from mono-fucosylated precursors. However does not catalyze alpha 1-3 fucosylation when an internal alpha 1-3 fucosylation is present in polylactosamine chain and the fucosylation rate of the internal GlcNAc residues is reduced once fucose has been added to the distal GlcNAc. Also catalyzes the transfer of a fucose from GDP-beta-fucose to the 6-sulfated a(2,3)sialylated substrate to produce 6-sulfo sLex mediating significant L-selectin-dependent cell adhesion. Through sialyl-Lewis(x) biosynthesis, can control SELE- and SELP-mediated cell adhesion with leukocytes and allows leukocytes tethering and rolling along the endothelial tissue thereby enabling the leukocytes to accumulate at a site of inflammation. May enhance embryo implantation through sialyl Lewis X (sLeX)-mediated adhesion of embryo cells to endometrium. May affect insulin signaling by up-regulating the phosphorylation and expression of some signaling molecules involved in the insulin-signaling pathway through SLe(x) which is present on the glycans of the INSRR alpha subunit. This chain is Alpha-(1,3)-fucosyltransferase 7, found in Bos taurus (Bovine).